The sequence spans 100 residues: Small ribosomal subunit protein uS14c (100 aa).

This sequence belongs to the universal ribosomal protein uS14 family. In terms of assembly, part of the 30S ribosomal subunit.

The protein localises to the plastid. Its subcellular location is the chloroplast. Binds 16S rRNA, required for the assembly of 30S particles. This is Small ribosomal subunit protein uS14c from Cryptomeria japonica (Japanese cedar).